The primary structure comprises 89 residues: Small ribosomal subunit protein uS15 (89 aa).

This sequence belongs to the universal ribosomal protein uS15 family. As to quaternary structure, part of the 30S ribosomal subunit. Forms a bridge to the 50S subunit in the 70S ribosome, contacting the 23S rRNA.

Functionally, one of the primary rRNA binding proteins, it binds directly to 16S rRNA where it helps nucleate assembly of the platform of the 30S subunit by binding and bridging several RNA helices of the 16S rRNA. Its function is as follows. Forms an intersubunit bridge (bridge B4) with the 23S rRNA of the 50S subunit in the ribosome. The protein is Small ribosomal subunit protein uS15 of Cereibacter sphaeroides (strain ATCC 17023 / DSM 158 / JCM 6121 / CCUG 31486 / LMG 2827 / NBRC 12203 / NCIMB 8253 / ATH 2.4.1.) (Rhodobacter sphaeroides).